The following is a 90-amino-acid chain: Small ribosomal subunit protein uS15c (90 aa).

This sequence belongs to the universal ribosomal protein uS15 family. As to quaternary structure, part of the 30S ribosomal subunit.

Its subcellular location is the plastid. It localises to the chloroplast. This Zea mays (Maize) protein is Small ribosomal subunit protein uS15c (rps15-A).